Reading from the N-terminus, the 203-residue chain is N-(5'-phosphoribosyl)anthranilate isomerase (203 aa).

It belongs to the TrpF family.

It carries out the reaction N-(5-phospho-beta-D-ribosyl)anthranilate = 1-(2-carboxyphenylamino)-1-deoxy-D-ribulose 5-phosphate. Its pathway is amino-acid biosynthesis; L-tryptophan biosynthesis; L-tryptophan from chorismate: step 3/5. The protein is N-(5'-phosphoribosyl)anthranilate isomerase of Thermoanaerobacter pseudethanolicus (strain ATCC 33223 / 39E) (Clostridium thermohydrosulfuricum).